Consider the following 447-residue polypeptide: 3-phosphoshikimate 1-carboxyvinyltransferase (447 aa).

3-phosphoshikimate-binding residues include Lys-36, Ser-37, and Arg-41. Lys-36 lines the phosphoenolpyruvate pocket. Phosphoenolpyruvate is bound by residues Gly-109 and Arg-138. The 3-phosphoshikimate site is built by Ser-183, Gln-185, Asp-333, and Lys-360. A phosphoenolpyruvate-binding site is contributed by Gln-185. Residue Asp-333 is the Proton acceptor of the active site. Phosphoenolpyruvate is bound by residues Arg-364 and Arg-406.

The protein belongs to the EPSP synthase family. In terms of assembly, monomer.

It is found in the cytoplasm. It carries out the reaction 3-phosphoshikimate + phosphoenolpyruvate = 5-O-(1-carboxyvinyl)-3-phosphoshikimate + phosphate. The protein operates within metabolic intermediate biosynthesis; chorismate biosynthesis; chorismate from D-erythrose 4-phosphate and phosphoenolpyruvate: step 6/7. In terms of biological role, catalyzes the transfer of the enolpyruvyl moiety of phosphoenolpyruvate (PEP) to the 5-hydroxyl of shikimate-3-phosphate (S3P) to produce enolpyruvyl shikimate-3-phosphate and inorganic phosphate. This Synechocystis sp. (strain ATCC 27184 / PCC 6803 / Kazusa) protein is 3-phosphoshikimate 1-carboxyvinyltransferase.